The primary structure comprises 135 residues: Small ribosomal subunit protein uS8 (135 aa).

The protein belongs to the universal ribosomal protein uS8 family. As to quaternary structure, part of the 30S ribosomal subunit. Contacts proteins S5 and S12.

One of the primary rRNA binding proteins, it binds directly to 16S rRNA central domain where it helps coordinate assembly of the platform of the 30S subunit. This chain is Small ribosomal subunit protein uS8, found in Parafrankia sp. (strain EAN1pec).